The primary structure comprises 350 residues: Atypical chemokine receptor 4 (350 aa).

Residues 1 to 41 lie on the Extracellular side of the membrane; sequence MAVEYNQSTDYYYEENEMNDTHDYSQYEVICIKEEVRKFAK. N-linked (GlcNAc...) asparagine glycans are attached at residues N6 and N19. A helical transmembrane segment spans residues 42–66; the sequence is VFLPAFFTIAFIIGLAGNSTVVAIY. At 67 to 79 the chain is on the cytoplasmic side; the sequence is AYYKKRRTKTDVY. Residues 80–99 traverse the membrane as a helical segment; sequence ILNLAVADLFLLFTLPFWAV. Residues 100–113 lie on the Extracellular side of the membrane; it reads NAVHGWVLGKIMCK. An intrachain disulfide couples C112 to C184. A helical transmembrane segment spans residues 114–135; sequence VTSALYTVNFVSGMQFLACIST. The Cytoplasmic portion of the chain corresponds to 136–153; it reads DRYWAVTKAPSQSGVGKP. A helical membrane pass occupies residues 154 to 175; it reads CWVICFCVWVAAILLSIPQLVF. Residues 176–199 lie on the Extracellular side of the membrane; sequence YTVNHKARCVPIFPYHLGTSMKAS. The chain crosses the membrane as a helical span at residues 200–222; that stretch reads IQILEICIGFIIPFLIMAVCYFI. Over 223 to 241 the chain is Cytoplasmic; the sequence is TAKTLIKMPNIKKSQPLKV. Residues 242–265 form a helical membrane-spanning segment; sequence LFTVVIVFIVTQLPYNIVKFCQAI. Topologically, residues 266–283 are extracellular; that stretch reads DIIYSLITDCDMSKRMDV. A helical membrane pass occupies residues 284-306; sequence AIQITESIALFHSCLNPVLYVFM. Topologically, residues 307–350 are cytoplasmic; the sequence is GTSFKNYIMKVAKKYGSWRRQRQNVEEIPFESEDATEPTSTFSI.

This sequence belongs to the G-protein coupled receptor 1 family. Atypical chemokine receptor subfamily. Forms heteromers with CXCR3. Interacts with ARRB1 and ARRB2. The Ser/Thr residues in the C-terminal cytoplasmic tail may be phosphorylated. As to expression, expressed in circumvallate and fungiform papillae, olfactory epithelium and lung. Lower expression in liver, kidney and tongue epithelium bearing no taste papillae. Very low expression in the cerebral cortex of the brain.

It localises to the early endosome. The protein localises to the recycling endosome. Its subcellular location is the cell membrane. Functionally, atypical chemokine receptor that controls chemokine levels and localization via high-affinity chemokine binding that is uncoupled from classic ligand-driven signal transduction cascades, resulting instead in chemokine sequestration, degradation, or transcytosis. Also known as interceptor (internalizing receptor) or chemokine-scavenging receptor or chemokine decoy receptor. Acts as a receptor for chemokines CCL2, CCL8, CCL13, CCL19, CCL21 and CCL25. Chemokine-binding does not activate G-protein-mediated signal transduction but instead induces beta-arrestin recruitment, leading to ligand internalization. Plays an important role in controlling the migration of immune and cancer cells that express chemokine receptors CCR7 and CCR9, by reducing the availability of CCL19, CCL21, and CCL25 through internalization. Negatively regulates CXCR3-induced chemotaxis. Regulates T-cell development in the thymus. The chain is Atypical chemokine receptor 4 (ACKR4) from Bos taurus (Bovine).